Here is a 626-residue protein sequence, read N- to C-terminus: Phosphomethylpyrimidine synthase (626 aa).

Residues 92 to 106 (AREVKPEDNGLKGPD) show a composition bias toward basic and acidic residues. The tract at residues 92-117 (AREVKPEDNGLKGPDRSAGVPPFPNV) is disordered. Substrate-binding positions include N219, M248, Y277, H313, 333-335 (SRG), 374-377 (DGLR), and E413. H417 is a binding site for Zn(2+). Y440 is a substrate binding site. Residue H481 coordinates Zn(2+). Positions 561, 564, and 569 each coordinate [4Fe-4S] cluster.

It belongs to the ThiC family. In terms of assembly, homodimer. [4Fe-4S] cluster serves as cofactor.

It catalyses the reaction 5-amino-1-(5-phospho-beta-D-ribosyl)imidazole + S-adenosyl-L-methionine = 4-amino-2-methyl-5-(phosphooxymethyl)pyrimidine + CO + 5'-deoxyadenosine + formate + L-methionine + 3 H(+). It participates in cofactor biosynthesis; thiamine diphosphate biosynthesis. In terms of biological role, catalyzes the synthesis of the hydroxymethylpyrimidine phosphate (HMP-P) moiety of thiamine from aminoimidazole ribotide (AIR) in a radical S-adenosyl-L-methionine (SAM)-dependent reaction. This chain is Phosphomethylpyrimidine synthase, found in Novosphingobium aromaticivorans (strain ATCC 700278 / DSM 12444 / CCUG 56034 / CIP 105152 / NBRC 16084 / F199).